The primary structure comprises 115 residues: Large ribosomal subunit protein bL19 (115 aa).

It belongs to the bacterial ribosomal protein bL19 family.

In terms of biological role, this protein is located at the 30S-50S ribosomal subunit interface and may play a role in the structure and function of the aminoacyl-tRNA binding site. The protein is Large ribosomal subunit protein bL19 of Bacillus licheniformis (strain ATCC 14580 / DSM 13 / JCM 2505 / CCUG 7422 / NBRC 12200 / NCIMB 9375 / NCTC 10341 / NRRL NRS-1264 / Gibson 46).